The chain runs to 160 residues: Transcriptional repressor NrdR (160 aa).

A zinc finger lies at 3–34 (CPYCQCEDTQVKDSRPAEEGAVIRRRRVCSVC). An ATP-cone domain is found at 49 to 139 (LLVLKKSGRR…VYRDFRNASD (91 aa)).

Belongs to the NrdR family. Zn(2+) is required as a cofactor.

Negatively regulates transcription of bacterial ribonucleotide reductase nrd genes and operons by binding to NrdR-boxes. The sequence is that of Transcriptional repressor NrdR from Bartonella bacilliformis (strain ATCC 35685 / KC583 / Herrer 020/F12,63).